Consider the following 195-residue polypeptide: ATP-dependent Clp protease proteolytic subunit 2 (195 aa).

Ser-98 (nucleophile) is an active-site residue. His-123 is a catalytic residue.

Belongs to the peptidase S14 family. Fourteen ClpP subunits assemble into 2 heptameric rings which stack back to back to give a disk-like structure with a central cavity, resembling the structure of eukaryotic proteasomes.

The protein resides in the cytoplasm. The enzyme catalyses Hydrolysis of proteins to small peptides in the presence of ATP and magnesium. alpha-casein is the usual test substrate. In the absence of ATP, only oligopeptides shorter than five residues are hydrolyzed (such as succinyl-Leu-Tyr-|-NHMec, and Leu-Tyr-Leu-|-Tyr-Trp, in which cleavage of the -Tyr-|-Leu- and -Tyr-|-Trp bonds also occurs).. In terms of biological role, cleaves peptides in various proteins in a process that requires ATP hydrolysis. Has a chymotrypsin-like activity. Plays a major role in the degradation of misfolded proteins. ClpXP2 is involved in the complete degradation of the Site-2 clipped anti-sigma-W factor RsiW. This results in the release of SigW and the transcription activation of the genes under the control of the sigma-W factor. The polypeptide is ATP-dependent Clp protease proteolytic subunit 2 (Shouchella clausii (strain KSM-K16) (Alkalihalobacillus clausii)).